Consider the following 387-residue polypeptide: Succinate--CoA ligase [ADP-forming] subunit beta (387 aa).

The ATP-grasp domain occupies 9-244 (KALLQRYGVN…WSQDDAKEAE (236 aa)). ATP-binding positions include Lys-46, 53–55 (GRG), Glu-99, Leu-102, and Glu-107. Mg(2+)-binding residues include Asn-199 and Asp-213. Residues Asn-264 and 321-323 (GIM) each bind substrate.

Belongs to the succinate/malate CoA ligase beta subunit family. As to quaternary structure, heterotetramer of two alpha and two beta subunits. Mg(2+) serves as cofactor.

It carries out the reaction succinate + ATP + CoA = succinyl-CoA + ADP + phosphate. The catalysed reaction is GTP + succinate + CoA = succinyl-CoA + GDP + phosphate. It participates in carbohydrate metabolism; tricarboxylic acid cycle; succinate from succinyl-CoA (ligase route): step 1/1. Its function is as follows. Succinyl-CoA synthetase functions in the citric acid cycle (TCA), coupling the hydrolysis of succinyl-CoA to the synthesis of either ATP or GTP and thus represents the only step of substrate-level phosphorylation in the TCA. The beta subunit provides nucleotide specificity of the enzyme and binds the substrate succinate, while the binding sites for coenzyme A and phosphate are found in the alpha subunit. The polypeptide is Succinate--CoA ligase [ADP-forming] subunit beta (Methylobacillus flagellatus (strain ATCC 51484 / DSM 6875 / VKM B-1610 / KT)).